Here is a 2640-residue protein sequence, read N- to C-terminus: Collagen alpha-5(VI) chain (2640 aa).

A signal peptide spans 1-18 (MKLRLIAFVLILWTETLA). Residues 19–1426 (DQSPGPGPEY…ACCCTFCKCP (1408 aa)) form a nonhelical region region. 7 consecutive VWFA domains span residues 30 to 209 (DVVF…IKDV), 268 to 445 (DLIF…LKKI), 474 to 644 (DIYF…KNEI), 660 to 829 (DIMF…ESKL), 846 to 1023 (DIVF…QETL), 1037 to 1214 (DVIF…VREI), and 1226 to 1413 (DVVV…LGNI). 3 N-linked (GlcNAc...) asparagine glycosylation sites follow: asparagine 201, asparagine 292, and asparagine 614. 5 Collagen-like domains span residues 1426–1478 (PGIP…GCPG), 1474–1524 (VGCP…DPGN), 1557–1614 (GQKG…GPEG), 1632–1689 (GSQG…GIPG), and 1706–1762 (GDPG…AGQP). Positions 1427 to 1760 (GIPGPHGTRG…GRRGPKGTAG (334 aa)) are triple-helical region. A disordered region spans residues 1435–1761 (RGLQASKGSS…RRGPKGTAGQ (327 aa)). Basic and acidic residues predominate over residues 1452-1464 (HRGEDGDPGRRGE). A compositionally biased stretch (basic and acidic residues) spans 1537–1567 (DGEKGFPGDPGDPGKDSNIKGQKGEKGERGR). The span at 1597-1609 (PSGQAGNPGPQGT) shows a compositional bias: polar residues. Positions 1610–1622 (QGPEGLQGSQGSS) are enriched in low complexity. Positions 1649–1651 (RGD) match the Cell attachment site motif. Gly residues predominate over residues 1718–1727 (GIPGGPGPKG). Positions 1740–1750 (RSGLQGSQGPP) are enriched in low complexity. Residues 1761–2640 (QPIYSPCELI…NSKQDGEDAR (880 aa)) are nonhelical region. VWFA domains lie at 1790-1970 (ELVF…KLRR) and 1996-2186 (DVAF…VKFL). 2 consecutive short sequence motifs (cell attachment site) follow at residues 2216–2218 (RGD) and 2259–2261 (RGD). The region spanning 2321–2516 (DVAFLIDASQ…PDLDYVIKFI (196 aa)) is the VWFA 10 domain. Residue asparagine 2541 is glycosylated (N-linked (GlcNAc...) asparagine). Residues 2617–2640 (DKEEPCSAETPAPVNSKQDGEDAR) are disordered.

This sequence belongs to the type VI collagen family. In terms of assembly, trimers composed of three different chains: alpha-1(VI), alpha-2(VI), and alpha-3(VI) or alpha-4(VI) or alpha-5(VI) or alpha-6(VI). Post-translationally, prolines at the third position of the tripeptide repeating unit (G-X-Y) are hydroxylated in some or all of the chains. In newborn, it is expressed in lung, heart, kidney, muscle, brain, intestine, skin, femur, sternum and calvaria. In adult, it is widely expressed and is detected in lung, heart, kidney, spleen, muscle, ovary, uterus, brain, skin, liver and sternum.

The protein localises to the secreted. It is found in the extracellular space. The protein resides in the extracellular matrix. Collagen VI acts as a cell-binding protein. This chain is Collagen alpha-5(VI) chain (Col6a5), found in Mus musculus (Mouse).